Here is a 23-residue protein sequence, read N- to C-terminus: Phospholipase A2 homolog 4 (23 aa).

Belongs to the phospholipase A2 family. Group II subfamily. K49 sub-subfamily. In terms of assembly, homodimer; non-covalently linked (probable alternative/compact dimer conformation in solution). Expressed by the venom gland.

The protein localises to the secreted. Its function is as follows. Snake venom phospholipase A2 homolog that lacks enzymatic activity. Induces acute muscle damage after intramuscular injection in mice and disrupts negatively charged liposomes but not positively charged ones. Also exerts a weak anticoagulant effect only at concentrations of 40 ug/ml or higher. A model of myotoxic mechanism has been proposed: an apo Lys49-PLA2 is activated by the entrance of a hydrophobic molecule (e.g. fatty acid) at the hydrophobic channel of the protein leading to a reorientation of a monomer. This reorientation causes a transition between 'inactive' to 'active' states, causing alignment of C-terminal and membrane-docking sites (MDoS) side-by-side and putting the membrane-disruption sites (MDiS) in the same plane, exposed to solvent and in a symmetric position for both monomers. The MDoS region stabilizes the toxin on membrane by the interaction of charged residues with phospholipid head groups. Subsequently, the MDiS region destabilizes the membrane with penetration of hydrophobic residues. This insertion causes a disorganization of the membrane, allowing an uncontrolled influx of ions (i.e. calcium and sodium), and eventually triggering irreversible intracellular alterations and cell death. The sequence is that of Phospholipase A2 homolog 4 from Bothrops asper (Terciopelo).